Reading from the N-terminus, the 452-residue chain is Pup--protein ligase (452 aa).

Glu-9 provides a ligand contact to Mg(2+). Residue Arg-53 coordinates ATP. Residue Tyr-55 participates in Mg(2+) binding. Asp-57 (proton acceptor) is an active-site residue. Glu-63 lines the Mg(2+) pocket. ATP contacts are provided by Thr-66 and Trp-419.

The protein belongs to the Pup ligase/Pup deamidase family. Pup-conjugating enzyme subfamily. Pupylated at an undetermined lysine residue by the prokaryotic ubiquitin-like protein Pup, which leads to its degradation by the proteasome and thereby constitutes a negative auto-regulation.

It carries out the reaction ATP + [prokaryotic ubiquitin-like protein]-L-glutamate + [protein]-L-lysine = ADP + phosphate + N(6)-([prokaryotic ubiquitin-like protein]-gamma-L-glutamyl)-[protein]-L-lysine.. It participates in protein degradation; proteasomal Pup-dependent pathway. Its pathway is protein modification; protein pupylation. In terms of biological role, catalyzes the covalent attachment of the prokaryotic ubiquitin-like protein modifier Pup to the proteasomal substrate proteins, thereby targeting them for proteasomal degradation. This tagging system is termed pupylation. The ligation reaction likely involves the side-chain carboxylate of the C-terminal glutamate of Pup and the side-chain amino group of a substrate lysine. The protein is Pup--protein ligase (pafA) of Mycolicibacterium smegmatis (strain ATCC 700084 / mc(2)155) (Mycobacterium smegmatis).